We begin with the raw amino-acid sequence, 188 residues long: Apolipophorin-3 (188 aa).

Positions 1-17 are cleaved as a signal peptide; sequence MVAKLFVLVACIALSHA. Residues 18–22 constitute a propeptide that is removed on maturation; that stretch reads AMVRR.

Belongs to the insect apolipophorin-3 family. Equilibrium between a soluble monomer and a bound lipoprotein form. Apolipophorin-3 associates with lipophorin during lipid loading until each particle contains 9 or 14 molecules of apolipophorin-3. Expressed in fat body and secreted in hemolymph. Also expressed in ovary and testis at lower levels.

Its subcellular location is the secreted. In terms of biological role, assists in the loading of diacylglycerol, generated from triacylglycerol stores in the fat body through the action of adipokinetic hormone, into lipophorin, the hemolymph lipoprotein. It increases the lipid carrying capacity of lipophorin by covering the expanding hydrophobic surface resulting from diacylglycerol uptake. It thus plays a critical role in the transport of lipids during flight in several species of insects. In Spodoptera litura (Asian cotton leafworm), this protein is Apolipophorin-3.